Reading from the N-terminus, the 984-residue chain is Putative formate dehydrogenase SA2102 (984 aa).

The 2Fe-2S ferredoxin-type domain occupies 3-79 (EHLVVTLDGK…PMTVNTVNND (77 aa)). The [2Fe-2S] cluster site is built by C37, C48, C51, and C63. The 4Fe-4S His(Cys)3-ligated-type domain occupies 79–119 (DVKDAQKEALDRILEKHMLYCTVCDYNNGDCEIHNTMDAWG). Residues H95, C99, C102, C109, C147, C150, C153, C157, C190, C193, C196, C200, C264, C267, C271, and C299 each contribute to the [4Fe-4S] cluster site. 2 consecutive 4Fe-4S ferredoxin-type domains span residues 138–165 (PFYR…VNET) and 181–211 (NDVP…VNME). Residues 252-984 (MRKERIKKTK…YVFPGNQVDK (733 aa)) are formate dehydrogenase. Positions 257 to 313 (IKKTKTVCTYCGVGCSFEVWTKDREILKVQPSHDSPANKIATCVKGKFSWGHINSDQ) constitute a 4Fe-4S Mo/W bis-MGD-type domain.

This sequence in the C-terminal section; belongs to the prokaryotic molybdopterin-containing oxidoreductase family. [2Fe-2S] cluster is required as a cofactor. The cofactor is [4Fe-4S] cluster. Mo-bis(molybdopterin guanine dinucleotide) serves as cofactor.

The enzyme catalyses formate + NAD(+) = CO2 + NADH. This chain is Putative formate dehydrogenase SA2102, found in Staphylococcus aureus (strain N315).